Consider the following 1766-residue polypeptide: Putative ATP-dependent RNA helicase R366 (1766 aa).

The interval 209-239 (KSSSNQNSNQSNQESNESNQEPNESNQEINQ) is disordered. Over residues 210–239 (SSSNQNSNQSNQESNESNQEPNESNQEINQ) the composition is skewed to low complexity. Residues 656–865 (YHHYSNNRVL…RYYRRINDNR (210 aa)) form the Helicase ATP-binding domain. 669–676 (GATGVGKS) contacts ATP. The DEAH box signature appears at 812–815 (DEAH). Positions 947-1116 (DIHKSIKAIN…TMVKLIKSYP (170 aa)) constitute a Helicase C-terminal domain.

It belongs to the DEAD box helicase family. DEAH subfamily.

The catalysed reaction is ATP + H2O = ADP + phosphate + H(+). This Acanthamoeba polyphaga mimivirus (APMV) protein is Putative ATP-dependent RNA helicase R366.